The chain runs to 127 residues: Protein ApaG (127 aa).

In terms of domain architecture, ApaG spans asparagine 3 to histidine 127.

This chain is Protein ApaG, found in Nitrosomonas europaea (strain ATCC 19718 / CIP 103999 / KCTC 2705 / NBRC 14298).